A 222-amino-acid polypeptide reads, in one-letter code: Cytidylate kinase (222 aa).

An ATP-binding site is contributed by 12–20; that stretch reads GPSGAGKGT.

This sequence belongs to the cytidylate kinase family. Type 1 subfamily.

The protein localises to the cytoplasm. The enzyme catalyses CMP + ATP = CDP + ADP. It carries out the reaction dCMP + ATP = dCDP + ADP. This Methylococcus capsulatus (strain ATCC 33009 / NCIMB 11132 / Bath) protein is Cytidylate kinase.